An 82-amino-acid polypeptide reads, in one-letter code: Delta-conotoxin SVIE (82 aa).

Residues 1-22 (MKLTCVMIVAVLFLTTWTFVTA) form the signal peptide. Positions 23–51 (DDSRYGLKNLFPKARHEMKNPEASKLNKR) are excised as a propeptide. Intrachain disulfides connect cysteine 54–cysteine 69, cysteine 61–cysteine 73, and cysteine 68–cysteine 77. 4-hydroxyproline is present on proline 65.

Belongs to the conotoxin O1 superfamily. As to expression, expressed by the venom duct.

The protein resides in the secreted. Functionally, delta-conotoxins bind to site 6 of voltage-gated sodium channels (Nav) and inhibit the inactivation process. Impairs rapid channel inactivation of Nav1.4/SCN4A (Kd=500 nM). Interacts with a conserved hydrophobic triad (YFV) in the domain-4 voltage sensor of sodium channels. In vivo, injection of both native or synthetic peptide induces twitching of back limbs, running in circles, and spastic paralysis. This Conus striatus (Striated cone) protein is Delta-conotoxin SVIE (SO6).